Consider the following 281-residue polypeptide: Pantothenate synthetase (281 aa).

30–37 (MGYLHEGH) contacts ATP. His37 serves as the catalytic Proton donor. Gln61 provides a ligand contact to (R)-pantoate. Residue Gln61 coordinates beta-alanine. Position 147-150 (147-150 (GEKD)) interacts with ATP. (R)-pantoate is bound at residue Gln153. Residues Ile176 and 184-187 (KSSR) contribute to the ATP site.

The protein belongs to the pantothenate synthetase family. Homodimer.

It is found in the cytoplasm. It catalyses the reaction (R)-pantoate + beta-alanine + ATP = (R)-pantothenate + AMP + diphosphate + H(+). Its pathway is cofactor biosynthesis; (R)-pantothenate biosynthesis; (R)-pantothenate from (R)-pantoate and beta-alanine: step 1/1. Catalyzes the condensation of pantoate with beta-alanine in an ATP-dependent reaction via a pantoyl-adenylate intermediate. The protein is Pantothenate synthetase of Clostridium botulinum (strain Langeland / NCTC 10281 / Type F).